We begin with the raw amino-acid sequence, 120 residues long: NAD(P)H-quinone oxidoreductase subunit 3, chloroplastic (120 aa).

Helical transmembrane passes span 9-29 (IFWA…LISG), 64-84 (MFAL…PWAM), and 88-108 (VLGV…IVGS).

It belongs to the complex I subunit 3 family. In terms of assembly, NDH is composed of at least 16 different subunits, 5 of which are encoded in the nucleus.

The protein resides in the plastid. Its subcellular location is the chloroplast thylakoid membrane. It carries out the reaction a plastoquinone + NADH + (n+1) H(+)(in) = a plastoquinol + NAD(+) + n H(+)(out). It catalyses the reaction a plastoquinone + NADPH + (n+1) H(+)(in) = a plastoquinol + NADP(+) + n H(+)(out). Functionally, NDH shuttles electrons from NAD(P)H:plastoquinone, via FMN and iron-sulfur (Fe-S) centers, to quinones in the photosynthetic chain and possibly in a chloroplast respiratory chain. The immediate electron acceptor for the enzyme in this species is believed to be plastoquinone. Couples the redox reaction to proton translocation, and thus conserves the redox energy in a proton gradient. The sequence is that of NAD(P)H-quinone oxidoreductase subunit 3, chloroplastic from Platanus occidentalis (Sycamore).